Here is a 124-residue protein sequence, read N- to C-terminus: Competence protein ComGG (124 aa).

A signal peptide spans 1 to 28; sequence MYRTRGFIYPAVLFVSALVLLIVNFVAA.

As to quaternary structure, the transformation pili are flexible filaments, consisting mainly of the major pilin ComGC and smaller amounts of the minor pilins, including at least ComGD, ComGF and ComGG. Interacts with ComGC; the interaction is probably direct. Interacts with ComGD. Interacts with ComGF. May act as a link between ComGC, ComGD and ComGF. Homodimer; disulfide-linked. A minor fraction of ComGG is found as a disulfide-bonded homodimer. Post-translationally, partial processing of ComGG in competent cells requires ComC.

The protein resides in the cell membrane. It localises to the secreted. Required for formation of the type IV-like pilus (T4P) that plays a role in transformation. Transformation pili are dynamically extended and retracted, perhaps thereby promoting DNA uptake and transformation. Required for transformation and DNA binding. This is Competence protein ComGG (comGG) from Bacillus subtilis (strain 168).